Here is a 349-residue protein sequence, read N- to C-terminus: Anthranilate phosphoribosyltransferase (349 aa).

5-phospho-alpha-D-ribose 1-diphosphate contacts are provided by residues G82, 85–86 (GD), 92–95 (NVST), 110–118 (KHGNRAVSG), and S122. G82 lines the anthranilate pocket. S94 is a Mg(2+) binding site. N113 is an anthranilate binding site. R168 contributes to the anthranilate binding site. 2 residues coordinate Mg(2+): D227 and E228.

Belongs to the anthranilate phosphoribosyltransferase family. In terms of assembly, homodimer. The cofactor is Mg(2+).

The catalysed reaction is N-(5-phospho-beta-D-ribosyl)anthranilate + diphosphate = 5-phospho-alpha-D-ribose 1-diphosphate + anthranilate. The protein operates within amino-acid biosynthesis; L-tryptophan biosynthesis; L-tryptophan from chorismate: step 2/5. Catalyzes the transfer of the phosphoribosyl group of 5-phosphorylribose-1-pyrophosphate (PRPP) to anthranilate to yield N-(5'-phosphoribosyl)-anthranilate (PRA). The protein is Anthranilate phosphoribosyltransferase of Pseudomonas fluorescens (strain SBW25).